Consider the following 205-residue polypeptide: Outer-membrane lipoprotein LolB (205 aa).

An N-terminal signal peptide occupies residues 1–17 (MFLRHVIVFSLIALLTG). The N-palmitoyl cysteine moiety is linked to residue C18. C18 carries the S-diacylglycerol cysteine lipid modification.

This sequence belongs to the LolB family. In terms of assembly, monomer.

Its subcellular location is the cell outer membrane. In terms of biological role, plays a critical role in the incorporation of lipoproteins in the outer membrane after they are released by the LolA protein. The chain is Outer-membrane lipoprotein LolB from Pseudomonas savastanoi pv. phaseolicola (strain 1448A / Race 6) (Pseudomonas syringae pv. phaseolicola (strain 1448A / Race 6)).